The primary structure comprises 554 residues: Glucose-6-phosphate isomerase (554 aa).

The active-site Proton donor is the Glu359. Active-site residues include His390 and Lys518.

It belongs to the GPI family.

The protein resides in the cytoplasm. It carries out the reaction alpha-D-glucose 6-phosphate = beta-D-fructose 6-phosphate. Its pathway is carbohydrate biosynthesis; gluconeogenesis. The protein operates within carbohydrate degradation; glycolysis; D-glyceraldehyde 3-phosphate and glycerone phosphate from D-glucose: step 2/4. Its function is as follows. Catalyzes the reversible isomerization of glucose-6-phosphate to fructose-6-phosphate. The sequence is that of Glucose-6-phosphate isomerase from Pseudomonas fluorescens (strain SBW25).